A 206-amino-acid chain; its full sequence is Large ribosomal subunit protein uL4 (206 aa).

Positions 43–78 (ARSGNRKQKDREEVHHTTKKPWRQKGTGRARAGMSS) are disordered. A compositionally biased stretch (basic and acidic residues) spans 49–58 (KQKDREEVHH). Basic residues predominate over residues 59 to 70 (TTKKPWRQKGTG).

Belongs to the universal ribosomal protein uL4 family. As to quaternary structure, part of the 50S ribosomal subunit.

One of the primary rRNA binding proteins, this protein initially binds near the 5'-end of the 23S rRNA. It is important during the early stages of 50S assembly. It makes multiple contacts with different domains of the 23S rRNA in the assembled 50S subunit and ribosome. Functionally, forms part of the polypeptide exit tunnel. This Herminiimonas arsenicoxydans protein is Large ribosomal subunit protein uL4.